Reading from the N-terminus, the 468-residue chain is Chitoporin (468 aa).

The signal sequence occupies residues 1–32 (MRTFSGKRSTLALAIAGVTAMSGFMAMPEARA).

Belongs to the outer membrane porin (Opr) (TC 1.B.25) family.

It localises to the cell outer membrane. In terms of biological role, involved in the uptake of chitosugars. This chain is Chitoporin (chiP), found in Escherichia coli (strain K12).